The sequence spans 41 residues: Alpha-1B-glycoprotein (41 aa).

Residue asparagine 23 is glycosylated (N-linked (GlcNAc...) asparagine).

Interacts with CRISP3. Post-translationally, glycosylated. In terms of tissue distribution, plasma.

It is found in the secreted. The sequence is that of Alpha-1B-glycoprotein (A1BG) from Equus caballus (Horse).